A 453-amino-acid chain; its full sequence is Kynureninase (453 aa).

Residues Leu-114, Thr-115, 142-145 (FPSD), Asp-232, His-235, and Tyr-257 each bind pyridoxal 5'-phosphate. Lys-258 carries the N6-(pyridoxal phosphate)lysine modification. Trp-286 is a pyridoxal 5'-phosphate binding site.

It belongs to the kynureninase family. In terms of assembly, homodimer. Pyridoxal 5'-phosphate serves as cofactor.

The protein resides in the cytoplasm. It carries out the reaction L-kynurenine + H2O = anthranilate + L-alanine + H(+). The enzyme catalyses 3-hydroxy-L-kynurenine + H2O = 3-hydroxyanthranilate + L-alanine + H(+). Its pathway is amino-acid degradation; L-kynurenine degradation; L-alanine and anthranilate from L-kynurenine: step 1/1. It participates in cofactor biosynthesis; NAD(+) biosynthesis; quinolinate from L-kynurenine: step 2/3. In terms of biological role, catalyzes the cleavage of L-kynurenine (L-Kyn) and L-3-hydroxykynurenine (L-3OHKyn) into anthranilic acid (AA) and 3-hydroxyanthranilic acid (3-OHAA), respectively. This chain is Kynureninase, found in Cryptococcus neoformans var. neoformans serotype D (strain JEC21 / ATCC MYA-565) (Filobasidiella neoformans).